A 199-amino-acid polypeptide reads, in one-letter code: Recombination protein RecR (199 aa).

A C4-type zinc finger spans residues 56-71 (CSICFNWSAEDPCEIC). A Toprim domain is found at 79-174 (SLWCVVADVK…TLRMTRLAFG (96 aa)).

It belongs to the RecR family.

Functionally, may play a role in DNA repair. It seems to be involved in an RecBC-independent recombinational process of DNA repair. It may act with RecF and RecO. The polypeptide is Recombination protein RecR (Synechococcus sp. (strain JA-2-3B'a(2-13)) (Cyanobacteria bacterium Yellowstone B-Prime)).